Reading from the N-terminus, the 467-residue chain is Asparagine--tRNA ligase (467 aa).

Belongs to the class-II aminoacyl-tRNA synthetase family. In terms of assembly, homodimer.

It is found in the cytoplasm. It carries out the reaction tRNA(Asn) + L-asparagine + ATP = L-asparaginyl-tRNA(Asn) + AMP + diphosphate + H(+). This chain is Asparagine--tRNA ligase, found in Pasteurella multocida (strain Pm70).